Here is a 362-residue protein sequence, read N- to C-terminus: UDP-N-acetylglucosamine--N-acetylmuramyl-(pentapeptide) pyrophosphoryl-undecaprenol N-acetylglucosamine transferase (362 aa).

Residues 15-17 (TGG), N127, R165, S191, I247, 266-271 (ALTVSE), and Q292 contribute to the UDP-N-acetyl-alpha-D-glucosamine site.

The protein belongs to the glycosyltransferase 28 family. MurG subfamily.

It is found in the cell inner membrane. The enzyme catalyses di-trans,octa-cis-undecaprenyl diphospho-N-acetyl-alpha-D-muramoyl-L-alanyl-D-glutamyl-meso-2,6-diaminopimeloyl-D-alanyl-D-alanine + UDP-N-acetyl-alpha-D-glucosamine = di-trans,octa-cis-undecaprenyl diphospho-[N-acetyl-alpha-D-glucosaminyl-(1-&gt;4)]-N-acetyl-alpha-D-muramoyl-L-alanyl-D-glutamyl-meso-2,6-diaminopimeloyl-D-alanyl-D-alanine + UDP + H(+). It functions in the pathway cell wall biogenesis; peptidoglycan biosynthesis. Functionally, cell wall formation. Catalyzes the transfer of a GlcNAc subunit on undecaprenyl-pyrophosphoryl-MurNAc-pentapeptide (lipid intermediate I) to form undecaprenyl-pyrophosphoryl-MurNAc-(pentapeptide)GlcNAc (lipid intermediate II). The sequence is that of UDP-N-acetylglucosamine--N-acetylmuramyl-(pentapeptide) pyrophosphoryl-undecaprenol N-acetylglucosamine transferase from Shewanella oneidensis (strain ATCC 700550 / JCM 31522 / CIP 106686 / LMG 19005 / NCIMB 14063 / MR-1).